The primary structure comprises 632 residues: Extracellular metalloproteinase 2 (632 aa).

A signal peptide spans 1–19; that stretch reads MHGLLLAGLAAALPLGVAG. Residues 20–244 constitute a propeptide that is removed on maturation; it reads LPARQQSGLS…VHNVVDYVAS (225 aa). Residue Asn270 is glycosylated (N-linked (GlcNAc...) asparagine). Position 429 (His429) interacts with Zn(2+). Residue Glu430 is part of the active site. Residue His433 coordinates Zn(2+).

Belongs to the peptidase M36 family. The cofactor is Zn(2+).

It localises to the secreted. Functionally, secreted metalloproteinase probably acting as a virulence factor. The polypeptide is Extracellular metalloproteinase 2 (MEP2) (Trichophyton tonsurans (Scalp ringworm fungus)).